A 445-amino-acid polypeptide reads, in one-letter code: UPF0210 protein SP_0239 (445 aa).

Belongs to the UPF0210 family. Homodimer.

This Streptococcus pneumoniae serotype 4 (strain ATCC BAA-334 / TIGR4) protein is UPF0210 protein SP_0239.